A 426-amino-acid chain; its full sequence is Trophoblast glycoprotein (426 aa).

The first 31 residues, 1-31 (MPGAGSRGPSAGDGRLRLARLALVLLGWVSA), serve as a signal peptide directing secretion. Residues 32–361 (SAPSSSLPSS…ATLPQSLQTS (330 aa)) lie on the Extracellular side of the membrane. The segment covering 34 to 51 (PSSSLPSSSTSPAAFLAS) has biased composition (low complexity). The tract at residues 34 to 54 (PSSSLPSSSTSPAAFLASGSA) is disordered. The 39-residue stretch at 53–91 (SAQPPPAERCPAACECSEAARTVKCVNRNLLEVPADLPP) folds into the LRRNT domain. 2 disulfide bridges follow: cysteine 62–cysteine 68 and cysteine 66–cysteine 77. LRR repeat units follow at residues 92-113 (YVRN…AFAR), 116-139 (PLAD…GAFE), and 141-163 (LPGL…FTFA). N-linked (GlcNAc...) asparagine glycosylation occurs at asparagine 124. Asparagine 166 carries an N-linked (GlcNAc...) asparagine glycan. 4 LRR repeats span residues 172–210 (PSPL…AALR), 215–238 (LRGL…LLDQ), 239–261 (LPSL…ASFR), and 262–281 (NLTH…VLHN). Asparagine 281 carries N-linked (GlcNAc...) asparagine glycosylation. An LRRCT domain is found at 289–352 (GLAHVRVFLD…LTSSDLDCDA (64 aa)). Cystine bridges form between cysteine 304-cysteine 329 and cysteine 306-cysteine 350. Residues 362 to 382 (YVFLGIVLALIGAIFLLVLYL) form a helical membrane-spanning segment. At 383-426 (NRKGIKKWMHNIRDACRDHMEGYHYRYEINADPRLTNLSSNSDV) the chain is on the cytoplasmic side. Serine 424 bears the Phosphoserine mark.

Post-translationally, highly glycosylated.

It localises to the cell membrane. Its function is as follows. May function as an inhibitor of Wnt/beta-catenin signaling by indirectly interacting with LRP6 and blocking Wnt3a-dependent LRP6 internalization. This Rattus norvegicus (Rat) protein is Trophoblast glycoprotein (Tpbg).